A 515-amino-acid polypeptide reads, in one-letter code: MNDQVIIFDTTLRDGEQALAASLTVKEKLQIAYALERLGVDVIEAGFPISSPGDFESVQTIAKHIKDSRICALSRAVAKDIDAAAEALKVADQFRIHTFISTSTVHVQDKLRRSYDDVVEMAVKAVKHARNYTDDVEFSCEDAGRTPIDNLCRMVEAAINAGAKTINIPDTVGYTVPNEFGGIIKTLFDRVPNIDQAIISVHCHDDLGMSVANSIAAVQAGARQIEGTINGIGERAGNCSLEEIAMIIKTRQELLGVHTGLDHKEIHRTSKLVSQLCHMPIQDNKAIVGANAFSHSSGIHQDGMLKNKNTYEIMTPESIGLKNKALNLTSRSGRAAVKSHMDAMGYKDNEYNLDSLYEDFLKLADRKGQVFDYDLEALMHFANLRDEDDFYKLNYLSVQSGSVMSTTSIKLQCGDEEKCEAAVGNGPVDALYQCIYRLTGYEIALDKFDLTAKGEGEDGLGQADIIANYKGRKYHGTGVSTDIVEASGQALLHVINSIQRADTIAEMKQQKFATV.

Positions 5-267 (VIIFDTTLRD…HTGLDHKEIH (263 aa)) constitute a Pyruvate carboxyltransferase domain. Mn(2+) is bound by residues aspartate 14, histidine 202, histidine 204, and asparagine 238. The tract at residues 392-515 (KLNYLSVQSG…EMKQQKFATV (124 aa)) is regulatory domain.

The protein belongs to the alpha-IPM synthase/homocitrate synthase family. LeuA type 1 subfamily. In terms of assembly, homodimer. Requires Mn(2+) as cofactor.

The protein localises to the cytoplasm. It catalyses the reaction 3-methyl-2-oxobutanoate + acetyl-CoA + H2O = (2S)-2-isopropylmalate + CoA + H(+). Its pathway is amino-acid biosynthesis; L-leucine biosynthesis; L-leucine from 3-methyl-2-oxobutanoate: step 1/4. Its function is as follows. Catalyzes the condensation of the acetyl group of acetyl-CoA with 3-methyl-2-oxobutanoate (2-ketoisovalerate) to form 3-carboxy-3-hydroxy-4-methylpentanoate (2-isopropylmalate). The chain is 2-isopropylmalate synthase from Vibrio atlanticus (strain LGP32) (Vibrio splendidus (strain Mel32)).